A 469-amino-acid polypeptide reads, in one-letter code: Phenylalanine--tRNA ligase alpha subunit (469 aa).

L-phenylalanine is bound by residues T309, 348–350 (QLD), and F388. A Mg(2+)-binding site is contributed by E390.

This sequence belongs to the class-II aminoacyl-tRNA synthetase family. Phe-tRNA synthetase alpha subunit type 2 subfamily. Tetramer of two alpha and two beta subunits. It depends on Mg(2+) as a cofactor.

It is found in the cytoplasm. It catalyses the reaction tRNA(Phe) + L-phenylalanine + ATP = L-phenylalanyl-tRNA(Phe) + AMP + diphosphate + H(+). This Sulfurisphaera tokodaii (strain DSM 16993 / JCM 10545 / NBRC 100140 / 7) (Sulfolobus tokodaii) protein is Phenylalanine--tRNA ligase alpha subunit.